A 501-amino-acid chain; its full sequence is ATP synthase subunit alpha (501 aa).

Residue 169–176 (GDRQTGKT) participates in ATP binding.

This sequence belongs to the ATPase alpha/beta chains family. As to quaternary structure, F-type ATPases have 2 components, CF(1) - the catalytic core - and CF(0) - the membrane proton channel. CF(1) has five subunits: alpha(3), beta(3), gamma(1), delta(1), epsilon(1). CF(0) has three main subunits: a(1), b(2) and c(9-12). The alpha and beta chains form an alternating ring which encloses part of the gamma chain. CF(1) is attached to CF(0) by a central stalk formed by the gamma and epsilon chains, while a peripheral stalk is formed by the delta and b chains.

The protein localises to the cell inner membrane. It carries out the reaction ATP + H2O + 4 H(+)(in) = ADP + phosphate + 5 H(+)(out). Produces ATP from ADP in the presence of a proton gradient across the membrane. The alpha chain is a regulatory subunit. The polypeptide is ATP synthase subunit alpha (Campylobacter jejuni subsp. jejuni serotype O:23/36 (strain 81-176)).